The following is a 309-amino-acid chain: Taste receptor type 2 member 45 (309 aa).

Position 1 (Met1) is a topological domain, extracellular. A helical membrane pass occupies residues 2 to 22 (ITFLPIIFSILVVVTFVIGNF). At 23–55 (ANGFIALVNSTEWVKRQKISFADQIVTALAVSR) the chain is on the cytoplasmic side. The chain crosses the membrane as a helical span at residues 56 to 76 (VGLLWVLLLNWYSTVLNPAFY). Over 77–98 (SVELRTTAYNIWAVTGHFSNWL) the chain is Extracellular. Residues 99–119 (ATSLSIFYLLKIANFSNLIFL) form a helical membrane-spanning segment. Residues 120-126 (HLKRRVK) lie on the Cytoplasmic side of the membrane. A helical transmembrane segment spans residues 127–147 (SVILVMLLGPLLFLACHLFVV). The Extracellular segment spans residues 148–178 (NMNQIVWTKEYEGNMTWKIKLRRAMYLSDTT). Asn161 carries an N-linked (GlcNAc...) asparagine glycan. Residues 179–199 (VTMLANLVPFTVTLISFLLLV) traverse the membrane as a helical segment. Residues 200–229 (CSLCEHLKKMQLHGKGSQDPSTKVHIKALQ) lie on the Cytoplasmic side of the membrane. A helical membrane pass occupies residues 230–250 (TVISFLLLCAIYFVSVIISVW). The Extracellular portion of the chain corresponds to 251 to 259 (SFKNLENKP). The chain crosses the membrane as a helical span at residues 260–280 (VFMFCQAIGFSCSSAHPFILI). The Cytoplasmic segment spans residues 281 to 309 (WGNKKLKQPFLSVLWQMRYWVKGEKPSSS).

The protein belongs to the G-protein coupled receptor T2R family.

The protein localises to the membrane. Functionally, receptor that may play a role in the perception of bitterness and is gustducin-linked. May play a role in sensing the chemical composition of the gastrointestinal content. The activity of this receptor may stimulate alpha gustducin, mediate PLC-beta-2 activation and lead to the gating of TRPM5. The chain is Taste receptor type 2 member 45 (TAS2R45) from Pan paniscus (Pygmy chimpanzee).